The following is a 706-amino-acid chain: Signal transducer and activator of transcription 1 (706 aa).

Positions 477–574 (WCIGFISKND…EEMLRFFESE (98 aa)) constitute an SH2 domain.

It belongs to the transcription factor STAT family. In terms of assembly, forms a homodimer or a heterodimer with a related family member. In terms of tissue distribution, expressed in adult and larval pharynx, head ganglia, tail ganglia, ventral nerve cord and body muscles.

Its subcellular location is the cytoplasm. The protein resides in the nucleus. Carries out a dual function: signal transduction and activation of transcription. Activated STAT proteins play a role in repression of dauer formation. Neuronal expression is held in check by negative signals through the TGF-beta pathway that target the daf-3 transcription factor. The chain is Signal transducer and activator of transcription 1 from Caenorhabditis elegans.